The sequence spans 708 residues: MKLFFPALLSLGALGLCLAASKKSVRWCTTSPAESSKCAQWQRRMKKVRGPSVTCVKKTSRFECIQAISTEKADAVTLDGGLVYDAGLDPYKLRPIAAEVYGTENNPQTHYYAVAIAKKGTNFQLNQLQGLKSCHTGLGRSAGWNIPMGLLRPFLDWTGPPEPLQKAVAKFFSASCVPCVDGKEYPNLCQLCAGTGENKCACSSQEPYFGYSGAFKCLQDGAGDVAFVKDSTVFESLPAKADRDQYELLCPNNTRKPVDAFQECHLARVPSHAVVARSVNGKEDLIWKLLVKAQEKFGRGKPSGFQLFGSPAGQKDLLFKDSALGLLRISSKIDSGLYLGSNYITAIRGLRETAAEVELRRAQVVWCAVGSDEQLKCQEWSRQSNQSVVCATASTTEDCIALVLKGEADALSLDGGYIYIAGKCGLVPVLAESQQSPESSGLDCVHRPVKGYLAVAVVRKANDKITWNSLRGKKSCHTAVDRTAGWNIPMGLLSKNTDSCRFDEFLSQSCAPGSDPRSKLCALCAGNEEGQNKCVPNSSERYYGYTGAFRCLAENVGDVAFVKDVTVLDNTDGKNTEQWAKDLKLGDFELLCLNGTRKPVTEAESCHLAVAPNHAVVSRIDKVAHLEQVLLRQQAHFGRNGRDCPGKFCLFQSKTKNLLFNDNTECLAKLQGKTTYEEYLGPQYVTAIAKLRRCSTSPLLEACAFLMR.

The signal sequence occupies residues M1–A19. Transferrin-like domains follow at residues V25–E352 and V364–R693. Cystine bridges form between C28-C64 and C38-C55. The interval R44–P51 is interaction with E.coli ompC. Fe(3+) is bound at residue D79. K92 is a catalytic residue. A Fe(3+)-binding site is contributed by Y111. Disulfide bonds link C134–C217, C176–C192, C179–C202, C189–C200, and C250–C264. Residues T136, R140, A142, and G143 each contribute to the hydrogencarbonate site. Y211 lines the Fe(3+) pocket. N252 carries N-linked (GlcNAc...) asparagine glycosylation. H272 provides a ligand contact to Fe(3+). The active-site Nucleophile is S278. 2 disulfides stabilise this stretch: C367–C399 and C377–C390. N-linked (GlcNAc...) asparagine glycosylation is present at N385. Residues D414 and Y452 each contribute to the Fe(3+) site. 8 disulfides stabilise this stretch: C424–C703, C444–C666, C476–C551, C500–C694, C510–C524, C521–C534, C592–C606, and C644–C649. T478, R482, A484, and G485 together coordinate hydrogencarbonate. N537 carries an N-linked (GlcNAc...) asparagine glycan. A Fe(3+)-binding site is contributed by Y545. N-linked (GlcNAc...) asparagine glycosylation is present at N594. H614 contributes to the Fe(3+) binding site.

The protein belongs to the transferrin family. In terms of assembly, monomer. Found in a complex with LTF, CLU, EPPIN and SEMG1. Interacts with E.coli outer membrane protein C (OmpC). Found in a complex with MPO and LTF; interacts directly with CP, allows Fe(3+) incorporation into LTF and activation of CP ferroxidase activity. In terms of processing, poly-N-acetyllactosaminic carbohydrate moiety seems to be needed for TLR4 activation.

The protein localises to the secreted. The protein resides in the cytoplasmic granule. Functionally, transferrins are iron binding transport proteins which can bind two Fe(3+) ions in association with the binding of an anion, usually bicarbonate. In terms of biological role, major iron-binding and multifunctional protein found in exocrine fluids such as breast milk and mucosal secretions. Has antimicrobial activity, which depends on the extracellular cation concentration. Antimicrobial properties include bacteriostasis, which is related to its ability to sequester free iron and thus inhibit microbial growth, as well as direct bactericidal properties leading to the release of lipopolysaccharides from the bacterial outer membrane. Can also prevent bacterial biofilm development in P.aeruginosa infection. Has weak antifungal activity against C.albicans. Has anabolic, differentiating and anti-apoptotic effects on osteoblasts and can also inhibit osteoclastogenesis, possibly playing a role in the regulation of bone growth. Promotes binding of species C adenoviruses to epithelial cells, promoting adenovirus infection. Can inhibit papillomavirus infections. Stimulates the TLR4 signaling pathway leading to NF-kappa-B activation and subsequent pro-inflammatory cytokine production while also interfering with the lipopolysaccharide (LPS)-stimulated TLR4 signaling. Inhibits neutrophil granulocyte migration to sites of apoptosis, when secreted by apoptotic cells. Stimulates VEGFA-mediated endothelial cell migration and proliferation. Binds heparin, chondroitin sulfate and possibly other glycosaminoglycans (GAGs). Also binds specifically to pneumococcal surface protein A (PspA), the lipid A portion of bacterial lipopolysaccharide (LPS), lysozyme and DNA. Lactoferricin binds to the bacterial surface and is crucial for the bactericidal functions. Has some antiviral activity against papillomavirus infection. N-terminal region shows strong antifungal activity against C.albicans. Contains two BBXB heparin-binding consensus sequences that appear to form the predominate functional GAG-binding site. Its function is as follows. The lactotransferrin transferrin-like domain 1 functions as a serine protease of the peptidase S60 family that cuts arginine rich regions. This function contributes to the antimicrobial activity. Shows a preferential cleavage at -Arg-Ser-Arg-Arg-|- and -Arg-Arg-Ser-Arg-|-, and of Z-Phe-Arg-|-aminomethylcoumarin sites. The sequence is that of Lactotransferrin (LTF) from Camelus dromedarius (Dromedary).